Reading from the N-terminus, the 273-residue chain is Urease accessory protein UreD (273 aa).

This sequence belongs to the UreD family. UreD, UreF and UreG form a complex that acts as a GTP-hydrolysis-dependent molecular chaperone, activating the urease apoprotein by helping to assemble the nickel containing metallocenter of UreC. The UreE protein probably delivers the nickel.

The protein localises to the cytoplasm. In terms of biological role, required for maturation of urease via the functional incorporation of the urease nickel metallocenter. This is Urease accessory protein UreD from Rhizobium johnstonii (strain DSM 114642 / LMG 32736 / 3841) (Rhizobium leguminosarum bv. viciae).